Consider the following 613-residue polypeptide: Phosphoinositide phospholipase C 6 (613 aa).

The PI-PLC X-box domain occupies 137–281 (QDMTAPLSHY…LLHRIIISTK (145 aa)). Catalysis depends on residues H152 and H198. The segment at 288 to 349 (ESRNPIVKQK…ASEDQKPAYK (62 aa)) is disordered. The PI-PLC Y-box domain maps to 349–465 (KRLITIHAGK…GYVKKPNFLM (117 aa)). The 130-residue stretch at 466–595 (KKGFHDEVFD…PGIRSVPLYD (130 aa)) folds into the C2 domain.

It depends on Ca(2+) as a cofactor. Expressed in leaves, flowers and siliques, but not in roots.

The protein localises to the cell membrane. The catalysed reaction is a 1,2-diacyl-sn-glycero-3-phospho-(1D-myo-inositol-4,5-bisphosphate) + H2O = 1D-myo-inositol 1,4,5-trisphosphate + a 1,2-diacyl-sn-glycerol + H(+). The production of the second messenger molecules diacylglycerol (DAG) and inositol 1,4,5-trisphosphate (IP3) is mediated by activated phosphatidylinositol-specific phospholipase C enzymes. This chain is Phosphoinositide phospholipase C 6 (PLC6), found in Arabidopsis thaliana (Mouse-ear cress).